Reading from the N-terminus, the 740-residue chain is ATP-dependent RNA helicase DDX1 (740 aa).

The tract at residues 1 to 295 (MAAFSEMGVM…APKALIVEPS (295 aa)) is necessary for interaction with HNRNPK. Residues 1 to 448 (MAAFSEMGVM…DTVHHVVVPV (448 aa)) are interaction with dsRNA. The necessary for interaction with RELA stretch occupies residues 1–525 (MAAFSEMGVM…KIDCDNLEQY (525 aa)). One can recognise a Helicase ATP-binding domain in the interval 2–428 (AAFSEMGVMP…SEKIMHFPTW (427 aa)). 46 to 53 (AETGSGKT) is a binding site for ATP. The region spanning 70 to 247 (DQQEGKKGKA…LKFNFGEEEF (178 aa)) is the B30.2/SPRY domain. N6-acetyllysine occurs at positions 239 and 268. The residue at position 281 (lysine 281) is an N6-acetyllysine; alternate. Lysine 281 participates in a covalent cross-link: Glycyl lysine isopeptide (Lys-Gly) (interchain with G-Cter in SUMO2); alternate. The DEAD box signature appears at 370-373 (DEAD). The residue at position 481 (serine 481) is a Phosphoserine. A Helicase C-terminal domain is found at 493–681 (KGEYAVRAIK…QVEPDIKVPV (189 aa)). The tract at residues 525-740 (YFMQQGGGPD…YLPNQLFRTF (216 aa)) is necessary for interaction with HNRNPK.

Belongs to the DEAD box helicase family. DDX1 subfamily. In terms of assembly, found in a multi-helicase-TICAM1 complex at least composed of DHX36, DDX1, DDX21 and TICAM1; this complex exists in resting cells with or without poly(I:C) RNA ligand stimulation. Interacts with DHX36. Interacts (via B30.2/SPRY domain) with DDX21 (via N-terminus); this interaction serves as bridges to TICAM1. Interacts with FAM98A (via N- and C-terminus). Interacts with PHF5A (via C-terminus). Interacts with MBNL1. Interacts with CSTF2. Interacts with HNRNPK. Interacts with ATM. Interacts with RELA (via C-terminus). Component of the tRNA-splicing ligase complex. Interacts with PQBP1. Interacts with ERCC6. Phosphorylated by ATM kinase; phosphorylation is increased in response to ionizing radiation (IR).

The protein localises to the nucleus. Its subcellular location is the cytoplasm. The protein resides in the cytoplasmic granule. It localises to the cytosol. It is found in the mitochondrion. It catalyses the reaction ATP + H2O = ADP + phosphate + H(+). Its function is as follows. Acts as an ATP-dependent RNA helicase, able to unwind both RNA-RNA and RNA-DNA duplexes. Possesses 5' single-stranded RNA overhang nuclease activity. Possesses ATPase activity on various RNA, but not DNA polynucleotides. May play a role in RNA clearance at DNA double-strand breaks (DSBs), thereby facilitating the template-guided repair of transcriptionally active regions of the genome. Together with RELA, acts as a coactivator to enhance NF-kappa-B-mediated transcriptional activation. Acts as a positive transcriptional regulator of cyclin CCND2 expression. Binds to the cyclin CCND2 promoter region. Associates with chromatin at the NF-kappa-B promoter region via association with RELA. Binds to poly(A) RNA. May be involved in 3'-end cleavage and polyadenylation of pre-mRNAs. Component of the tRNA-splicing ligase complex required to facilitate the enzymatic turnover of catalytic subunit RTCB: together with archease (ZBTB8OS), acts by facilitating the guanylylation of RTCB, a key intermediate step in tRNA ligation. Component of a multi-helicase-TICAM1 complex that acts as a cytoplasmic sensor of viral double-stranded RNA (dsRNA) and plays a role in the activation of a cascade of antiviral responses including the induction of pro-inflammatory cytokines via the adapter molecule TICAM1. Specifically binds (via helicase ATP-binding domain) on both short and long poly(I:C) dsRNA. The polypeptide is ATP-dependent RNA helicase DDX1 (DDX1) (Bos taurus (Bovine)).